A 102-amino-acid polypeptide reads, in one-letter code: Small ribosomal subunit protein uS10 (102 aa).

This sequence belongs to the universal ribosomal protein uS10 family. As to quaternary structure, part of the 30S ribosomal subunit.

Functionally, involved in the binding of tRNA to the ribosomes. This chain is Small ribosomal subunit protein uS10, found in Methanoregula boonei (strain DSM 21154 / JCM 14090 / 6A8).